The chain runs to 563 residues: Pyruvate decarboxylase isozyme 2 (563 aa).

Pyruvate is bound by residues D28, H115, Y157, and R224. Thiamine diphosphate-binding positions include T390 and 413-415 (GSI). D444 is a Mg(2+) binding site. Residues 445 to 446 (GS) and 471 to 476 (NNGYTI) each bind thiamine diphosphate. Positions 471 and 473 each coordinate Mg(2+). E477 serves as a coordination point for pyruvate.

Belongs to the TPP enzyme family. In terms of assembly, homotetramer. Mg(2+) is required as a cofactor. It depends on thiamine diphosphate as a cofactor.

Its subcellular location is the cytoplasm. It is found in the nucleus. The catalysed reaction is pyruvate + H(+) = acetaldehyde + CO2. It catalyses the reaction 3-methyl-2-oxobutanoate + H(+) = 2-methylpropanal + CO2. It carries out the reaction (S)-3-methyl-2-oxopentanoate + H(+) = 2-methylbutanal + CO2. The enzyme catalyses indole-3-pyruvate + H(+) = indole-3-acetaldehyde + CO2. The catalysed reaction is 3-phenylpyruvate + H(+) = 2-phenylacetaldehyde + CO2. It catalyses the reaction 2-oxobutanoate + H(+) = propanal + CO2. It carries out the reaction 2-oxopentanoate + H(+) = butanal + CO2. The enzyme catalyses 2 acetaldehyde = acetoin. The catalysed reaction is acetaldehyde + pyruvate + H(+) = acetoin + CO2. The protein operates within fermentation; ethanol fermentation. Its pathway is amino-acid degradation; Ehrlich pathway. With respect to regulation, allosterically activated by its substrate, pyruvate. Second most abundant of three pyruvate decarboxylases (PDC1, PDC5, PDC6) implicated in the nonoxidative conversion of pyruvate to acetaldehyde and carbon dioxide during alcoholic fermentation. Most of the produced acetaldehyde is subsequently reduced to ethanol, but some is required for cytosolic acetyl-CoA production for biosynthetic pathways. The enzyme is also one of five 2-oxo acid decarboxylases (PDC1, PDC5, PDC6, ARO10, and THI3) able to decarboxylate more complex 2-oxo acids (alpha-keto-acids) than pyruvate, which seem mainly involved in amino acid catabolism. Here the enzyme catalyzes the decarboxylation of amino acids, which, in a first step, have been transaminated to the corresponding 2-oxo acids. In a third step, the resulting aldehydes are reduced to alcohols, collectively referred to as fusel oils or alcohols. Its preferred substrates are the transaminated amino acids derived from threonine (2-oxobutanoate), norvaline (2-oxopentanoate), valine (3-methyl-2-oxobutanoate, also alpha-keto-isovalerate), isoleucine ((3S)-3-methyl-2-oxopentanoate, also alpha-keto-beta-methylvalerate), phenylalanine (phenylpyruvate), and tryptophan (3-(indol-3-yl)pyruvate), whereas transaminated leucine is no substrate. In a side-reaction the carbanionic intermediate (or active aldehyde) generated by decarboxylation or by activation of an aldehyde can react with an aldehyde via condensation (or carboligation) yielding a 2-hydroxy ketone, collectively called acyloins. The protein is Pyruvate decarboxylase isozyme 2 (PDC5) of Saccharomyces cerevisiae (strain ATCC 204508 / S288c) (Baker's yeast).